The sequence spans 162 residues: Phosphopantetheine adenylyltransferase (162 aa).

Position 9 (Thr-9) interacts with substrate. ATP is bound by residues 9-10 and His-17; that span reads TF. The substrate site is built by Lys-41, Leu-76, and Arg-90. Residues 91–93, Glu-101, and 126–132 each bind ATP; these read GLR and HQAIASR.

The protein belongs to the bacterial CoaD family. In terms of assembly, homohexamer. Mg(2+) is required as a cofactor.

Its subcellular location is the cytoplasm. The catalysed reaction is (R)-4'-phosphopantetheine + ATP + H(+) = 3'-dephospho-CoA + diphosphate. The protein operates within cofactor biosynthesis; coenzyme A biosynthesis; CoA from (R)-pantothenate: step 4/5. Reversibly transfers an adenylyl group from ATP to 4'-phosphopantetheine, yielding dephospho-CoA (dPCoA) and pyrophosphate. In Caulobacter sp. (strain K31), this protein is Phosphopantetheine adenylyltransferase.